Here is a 241-residue protein sequence, read N- to C-terminus: Dephospho-CoA kinase CAB5 (241 aa).

The 209-residue stretch at 3 to 211 (VVGLTGGIAC…PSKLRTVLEY (209 aa)) folds into the DPCK domain. 8–15 (GGIACGKS) serves as a coordination point for ATP.

The protein belongs to the CoaE family.

The protein resides in the endoplasmic reticulum. It is found in the mitochondrion. Its subcellular location is the nucleus. It carries out the reaction 3'-dephospho-CoA + ATP = ADP + CoA + H(+). The protein operates within cofactor biosynthesis; coenzyme A biosynthesis; CoA from (R)-pantothenate: step 5/5. In terms of biological role, catalyzes the phosphorylation of the 3'-hydroxyl group of dephosphocoenzyme A to form coenzyme A. The sequence is that of Dephospho-CoA kinase CAB5 (CAB5) from Saccharomyces cerevisiae (strain ATCC 204508 / S288c) (Baker's yeast).